The chain runs to 92 residues: Small ribosomal subunit protein uS19c (92 aa).

This sequence belongs to the universal ribosomal protein uS19 family.

It localises to the plastid. It is found in the chloroplast. Its function is as follows. Protein S19 forms a complex with S13 that binds strongly to the 16S ribosomal RNA. This is Small ribosomal subunit protein uS19c from Vitis vinifera (Grape).